We begin with the raw amino-acid sequence, 339 residues long: Catalase-related peroxidase (339 aa).

The N-terminal stretch at 1–31 is a signal peptide; it reads MIRIRNRWFRWLAIALASLVASIGIATVGFA. Histidine 58 is a catalytic residue. Tyrosine 328 lines the heme pocket.

This sequence belongs to the catalase family. Heme serves as cofactor.

Its subcellular location is the periplasm. Functionally, has an organic peroxide-dependent peroxidase activity. The protein is Catalase-related peroxidase (srpA) of Synechococcus elongatus (strain ATCC 33912 / PCC 7942 / FACHB-805) (Anacystis nidulans R2).